The following is a 251-amino-acid chain: Alanyl-tRNA editing protein AlaX-M (251 aa).

Positions 107, 111, 210, and 214 each coordinate Zn(2+).

It belongs to the class-II aminoacyl-tRNA synthetase family. Editing domain AlaX-M subfamily. Zn(2+) is required as a cofactor.

Its subcellular location is the cytoplasm. Its function is as follows. Functions in trans to edit the amino acid moiety from mischarged Ser-tRNA(Ala). Recognition depends, at least in part, on the acceptor stem of tRNA(Ala). The sequence is that of Alanyl-tRNA editing protein AlaX-M (alaXM) from Methanosarcina mazei (strain ATCC BAA-159 / DSM 3647 / Goe1 / Go1 / JCM 11833 / OCM 88) (Methanosarcina frisia).